A 708-amino-acid polypeptide reads, in one-letter code: Exocyst complex component 5 (708 aa).

The residue at position 2 (Ala2) is an N-acetylalanine. Residues Lys40–Glu101 are a coiled coil. Phosphothreonine occurs at positions 122, 395, and 405. Residue Ser412 is modified to Phosphoserine.

This sequence belongs to the SEC10 family. As to quaternary structure, the exocyst complex is composed of EXOC1, EXOC2, EXOC3, EXOC4, EXOC5, EXOC6, EXOC7 and EXOC8. Interacts with EXOC3L1.

It localises to the cytoplasm. The protein resides in the midbody. In terms of biological role, component of the exocyst complex involved in the docking of exocytic vesicles with fusion sites on the plasma membrane. The protein is Exocyst complex component 5 (Exoc5) of Mus musculus (Mouse).